We begin with the raw amino-acid sequence, 707 residues long: MNQYLAVTSNGMENLLVEELTKLGIENAKPVQAGVKFKATNEQIYRCCLWSRLASRFVRVLSEFTCNDDMDLYLSTSSINWVNQFHSSKRFVVDFNGTNREIRNSQYGAMKVKDGIVDCFEKKGLPRPNISKERPDIRVHVRLHKDKAILGVDMVGSGLHQRGYRPESGRAPLRETLAAAIIMRCGWDGHQPLLDPMCGSGTLLIEAAMMAANMAPGVKRKQWCFESLEDFEPDTWAEIKSEANVQARRGVKKVDAKFFGFDNDPKVLKVAQENARRAGVEELIEFAQGDVATITRLSGFENGVIVSNPPYGERLGTEPGLIALYTAFGGQLKAEFGGCKASIFSSSDELLSCLRMRADKQFKLNNGALPCHQKNYSIAERSADEVKGADTNTQIAPDFSNRLKKNIGKIGKWARKEKLDCYRIYDADLPEYNVAIDVYGDQIVIQEYAAPKNIPEEKAKRRLTDIIRATIQVTGVEANKVVLKVREKQKGRSQYQKLGQVSETLEVNEYGVKLIVNLHDYLDTGLFLDHKITRRRLGEMAQGKDFLNLFAYTGSATVHAAVGGARSTTTVDMSNTYLNWAKDNMQLNGCIGRQHRFEQADCLQWLENAKGEYDLIFIDPPTFSNSKRMETSFDVQRDHIKLMTNLKRLLRAGGTIVFSNNKRHFKMDEEGLAELGLKAQNISSQTLPLDFSRNKHIHNCWLVTHAE.

The region spanning 43–154 (QIYRCCLWSR…KDKAILGVDM (112 aa)) is the THUMP domain.

The protein belongs to the methyltransferase superfamily. RlmKL family.

It localises to the cytoplasm. The enzyme catalyses guanosine(2445) in 23S rRNA + S-adenosyl-L-methionine = N(2)-methylguanosine(2445) in 23S rRNA + S-adenosyl-L-homocysteine + H(+). It catalyses the reaction guanosine(2069) in 23S rRNA + S-adenosyl-L-methionine = N(2)-methylguanosine(2069) in 23S rRNA + S-adenosyl-L-homocysteine + H(+). In terms of biological role, specifically methylates the guanine in position 2445 (m2G2445) and the guanine in position 2069 (m7G2069) of 23S rRNA. The polypeptide is Ribosomal RNA large subunit methyltransferase K/L (Vibrio parahaemolyticus serotype O3:K6 (strain RIMD 2210633)).